Reading from the N-terminus, the 557-residue chain is NADP-dependent malic enzyme (557 aa).

The active-site Proton donor is Tyr-91. NADP(+) is bound at residue Arg-144. Positions 144 and 162 each coordinate substrate. Lys-162 functions as the Proton acceptor in the catalytic mechanism. Mn(2+)-binding residues include Glu-234 and Asp-235. Asn-238 is an NADP(+) binding site. Asp-258 lines the Mn(2+) pocket. NADP(+)-binding positions include 291–294 (AGEA), Ser-325, Asn-397, and Asn-443. Position 443 (Asn-443) interacts with substrate.

This sequence belongs to the malic enzymes family. As to quaternary structure, homotetramer. The cofactor is Mg(2+). Mn(2+) is required as a cofactor. The N-terminus is blocked.

The protein localises to the cytoplasm. The enzyme catalyses (S)-malate + NADP(+) = pyruvate + CO2 + NADPH. The catalysed reaction is oxaloacetate + H(+) = pyruvate + CO2. This is NADP-dependent malic enzyme (ME1) from Columba livia (Rock dove).